The chain runs to 342 residues: Dihydroorotase (342 aa).

Zn(2+) contacts are provided by histidine 13 and histidine 15. Substrate-binding positions include 15-17 (HLR) and asparagine 41. Positions 98, 135, and 173 each coordinate Zn(2+). The residue at position 98 (lysine 98) is an N6-carboxylysine. Residue histidine 135 coordinates substrate. Position 218 (leucine 218) interacts with substrate. Residue aspartate 246 coordinates Zn(2+). Aspartate 246 is a catalytic residue. The substrate site is built by histidine 250 and alanine 262.

Belongs to the metallo-dependent hydrolases superfamily. DHOase family. Class II DHOase subfamily. Homodimer. It depends on Zn(2+) as a cofactor.

The catalysed reaction is (S)-dihydroorotate + H2O = N-carbamoyl-L-aspartate + H(+). It functions in the pathway pyrimidine metabolism; UMP biosynthesis via de novo pathway; (S)-dihydroorotate from bicarbonate: step 3/3. Catalyzes the reversible cyclization of carbamoyl aspartate to dihydroorotate. The chain is Dihydroorotase from Vibrio vulnificus (strain YJ016).